The chain runs to 53 residues: MFSQNICMWRDCFARCSPGYYERFECFHDCITKGYDDGNCVPGPKTGRCCCTR.

Intrachain disulfides connect cysteine 12/cysteine 51, cysteine 16/cysteine 40, cysteine 26/cysteine 49, and cysteine 30/cysteine 50.

It belongs to the DEFL family.

The protein is Putative defensin-like protein 53 of Arabidopsis thaliana (Mouse-ear cress).